We begin with the raw amino-acid sequence, 736 residues long: Eukaryotic translation initiation factor 3 subunit B (736 aa).

The interval 1–94 (MAAVFDDIRL…LFIEFEDAGA (94 aa)) is sufficient for interaction with HCR1 and TIF32. A sufficient for interaction with PIC8 region spans residues 1–219 (MAAVFDDIRL…GIASWGGPQF (219 aa)). The region spanning 37–120 (RYVVVDGAPV…HRLWVNGLDD (84 aa)) is the RRM domain. 10 WD repeats span residues 140–182 (EFEA…PENV), 186–224 (RRNWSNSILNFSPHGTYLFSFHDQGIASWGGPQFKRLRR), 226–244 (AHPDVKAISMSSTEKYLVT), 245–284 (FSSEPLEVSDEPNEACPFGPESRGHQLCIWDVATGVCVKT), 288–328 (PPQQ…QLLG), 332–375 (MKIE…QSCK), 443–483 (EIKD…VSFY), 511–557 (AIDG…TEKI), 566–604 (ATLRDVAHINYASATDYEWDPSGRYLAFWSSAWKHKAEN), and 616–662 (VREE…QDAM).

It belongs to the eIF-3 subunit B family. As to quaternary structure, component of the eukaryotic translation initiation factor 3 (eIF-3) complex.

The protein localises to the cytoplasm. RNA-binding component of the eukaryotic translation initiation factor 3 (eIF-3) complex, which is involved in protein synthesis of a specialized repertoire of mRNAs and, together with other initiation factors, stimulates binding of mRNA and methionyl-tRNAi to the 40S ribosome. The eIF-3 complex specifically targets and initiates translation of a subset of mRNAs involved in cell proliferation. This Eremothecium gossypii (strain ATCC 10895 / CBS 109.51 / FGSC 9923 / NRRL Y-1056) (Yeast) protein is Eukaryotic translation initiation factor 3 subunit B.